A 457-amino-acid polypeptide reads, in one-letter code: Argininosuccinate lyase (457 aa).

It belongs to the lyase 1 family. Argininosuccinate lyase subfamily.

Its subcellular location is the cytoplasm. It catalyses the reaction 2-(N(omega)-L-arginino)succinate = fumarate + L-arginine. The protein operates within amino-acid biosynthesis; L-arginine biosynthesis; L-arginine from L-ornithine and carbamoyl phosphate: step 3/3. The polypeptide is Argininosuccinate lyase (Exiguobacterium sibiricum (strain DSM 17290 / CCUG 55495 / CIP 109462 / JCM 13490 / 255-15)).